The primary structure comprises 644 residues: Neurofilament medium polypeptide (644 aa).

The segment at 1–33 is coil 1B; sequence VKVELDKKVQSLQDEVAFLRTNHEEEVADLLAQ. The IF rod domain occupies 1-197; the sequence is VKVELDKKVQ…KLLEGEETRF (197 aa). Residue Ser11 is modified to Phosphoserine. The interval 34 to 50 is linker 12; sequence IQASHITVERKDYLKTD. Residues 51–72 are coil 2A; the sequence is ISSALKEIRSQLECHSDQNMHQ. The tract at residues 73–76 is linker 2; sequence AEEW. Residues 77–197 are coil 2B; sequence FKCRYAKLTE…KLLEGEETRF (121 aa). At Tyr105 the chain carries Phosphotyrosine. 3 positions are modified to phosphoserine: Ser131, Ser203, and Ser215. Positions 198 to 643 are tail; the sequence is STFSGSITGP…HAIVKEVTQS (446 aa). Thr217 carries O-linked (GlcNAc) threonine glycosylation. A phosphoserine mark is found at Ser253 and Ser269. Positions 270 to 582 are disordered; it reads VKEEEKEEEA…GGDRSEEKVV (313 aa). Residues 274 to 292 are compositionally biased toward acidic residues; it reads EKEEEAEGKEEEQEAEEEV. Ser298 bears the Phosphoserine mark. A compositionally biased stretch (acidic residues) spans 308 to 328; that stretch reads KEEEGEKEEEGQEEEEEEEDE. The span at 329–350 shows a compositional bias: basic and acidic residues; sequence GVKSDQAEEGGSEKEGSSKNEG. Phosphoserine is present on residues Ser332, Ser340, Ser345, and Ser346. The segment covering 351 to 368 has biased composition (acidic residues); sequence EQEEGETEAEGEVEEAEA. Position 357 is a phosphothreonine (Thr357). Residues 369–400 are compositionally biased toward basic and acidic residues; sequence KEEKKTEEKSEEVAAKEEPVTEAKVGKPEKAK. Phosphoserine occurs at positions 401, 406, 442, and 465. A compositionally biased stretch (basic and acidic residues) spans 422-470; the sequence is GEQKEEEEKVEEEKKKAAKESPKEEKVEKKEEKPKDVPKKKAESPVKEE. Over residues 474 to 483 the composition is skewed to low complexity; that stretch reads EAATITKPTK. Basic and acidic residues predominate over residues 485–508; the sequence is GLEKETKEGEKPLQQEKEKEKAGE. Ser512, Ser550, and Ser566 each carry phosphoserine. The segment covering 545–557 has biased composition (basic and acidic residues); sequence TKEKGSGREEEKG. A compositionally biased stretch (basic and acidic residues) spans 568–582; sequence ADEKKGGDRSEEKVV.

The protein belongs to the intermediate filament family. As to quaternary structure, forms heterodimers with NEFL; which can further hetero-oligomerize (in vitro). Forms heterodimers with INA (in vitro). Post-translationally, there are a number of repeats of the tripeptide K-S-P, NFM is phosphorylated on a number of the serines in this motif. It is thought that phosphorylation of NFM results in the formation of interfilament cross bridges that are important in the maintenance of axonal caliber. Phosphorylation seems to play a major role in the functioning of the larger neurofilament polypeptides (NF-M and NF-H), the levels of phosphorylation being altered developmentally and coincidentally with a change in the neurofilament function. In terms of processing, phosphorylated in the head and rod regions by the PKC kinase PKN1, leading to the inhibition of polymerization.

It is found in the cytoplasm. The protein localises to the cytoskeleton. Its subcellular location is the cell projection. It localises to the axon. Functionally, neurofilaments usually contain three intermediate filament proteins: NEFL, NEFM, and NEFH which are involved in the maintenance of neuronal caliber. May additionally cooperate with the neuronal intermediate filament proteins PRPH and INA to form neuronal filamentous networks. This Oryctolagus cuniculus (Rabbit) protein is Neurofilament medium polypeptide (NEFM).